A 298-amino-acid chain; its full sequence is MDLMSALSLGELALSFSRVPLFPVFDLSYFIVSIIYLKYEPGAVELSRRHPVASWLCAMLHCFGSYILADLLLGEPIIDYFSNSSSILLASGVWYLIFFCPLDLFYKCVCFLPVKLIFVAMKEVVRVRKIAVGIHHAHHHYHHGWFIMIATGWVKGSGVALLSNVEQLLRGVWKPETNEILHMSFPTKASLYGAILFTLQQTRWLPVSKASLIFVFTMFMVSCKVFLTATHSHSSPFDILEGYICPVLFGATWGGDHHHDNHGAPHGMGLGTQHSGLPAKAKEELGEGSRKKKTKKAD.

At 1 to 18 the chain is on the lumenal side; it reads MDLMSALSLGELALSFSR. The helical transmembrane segment at 19–39 threads the bilayer; that stretch reads VPLFPVFDLSYFIVSIIYLKY. The Cytoplasmic portion of the chain corresponds to 40–51; the sequence is EPGAVELSRRHP. A helical transmembrane segment spans residues 52–72; the sequence is VASWLCAMLHCFGSYILADLL. The Lumenal segment spans residues 73–85; the sequence is LGEPIIDYFSNSS. Ca(2+) is bound at residue glycine 74. Residues 86-106 form a helical membrane-spanning segment; sequence SILLASGVWYLIFFCPLDLFY. Residues 107–144 are Cytoplasmic-facing; it reads KCVCFLPVKLIFVAMKEVVRVRKIAVGIHHAHHHYHHG. Lysine 122 and arginine 126 together coordinate a 1,2-diacyl-sn-glycero-3-phospho-(1D-myo-inositol-4,5-bisphosphate). A helical transmembrane segment spans residues 145–165; it reads WFIMIATGWVKGSGVALLSNV. The Lumenal portion of the chain corresponds to 166–178; it reads EQLLRGVWKPETN. The chain crosses the membrane as a helical span at residues 179–199; sequence EILHMSFPTKASLYGAILFTL. Residues 200–209 are Cytoplasmic-facing; the sequence is QQTRWLPVSK. The chain crosses the membrane as a helical span at residues 210 to 230; sequence ASLIFVFTMFMVSCKVFLTAT. Topologically, residues 231–234 are lumenal; that stretch reads HSHS. Residues 235-255 form a helical membrane-spanning segment; the sequence is SPFDILEGYICPVLFGATWGG. At 256–298 the chain is on the cytoplasmic side; that stretch reads DHHHDNHGAPHGMGLGTQHSGLPAKAKEELGEGSRKKKTKKAD. Residues 260-298 form a disordered region; the sequence is DNHGAPHGMGLGTQHSGLPAKAKEELGEGSRKKKTKKAD. A compositionally biased stretch (basic and acidic residues) spans 280-289; the sequence is KAKEELGEGS.

The protein belongs to the TMEM38 family. As to quaternary structure, homotrimer; conformation seems to be controled by binding to diacylglycerol (DAG). Expressed at high levels in heart and striated muscle. Also detected in brain, lung and kidney.

It is found in the sarcoplasmic reticulum membrane. The protein localises to the nucleus membrane. The enzyme catalyses K(+)(in) = K(+)(out). Channel activity is activated by a change of voltage within the sarcoplasmic reticulum lumen and blocked by luminal high Ca(2+) levels. Its function is as follows. Intracellular monovalent cation channel required for maintenance of rapid intracellular calcium release. Acts as a potassium counter-ion channel that functions in synchronization with calcium release from intracellular stores. Opened by a change of voltage within the sarcoplasmic reticulum lumen. This chain is Trimeric intracellular cation channel type A (Tmem38a), found in Mus musculus (Mouse).